Here is a 500-residue protein sequence, read N- to C-terminus: Probable cytosol aminopeptidase (500 aa).

2 residues coordinate Mn(2+): lysine 268 and aspartate 273. Lysine 280 is a catalytic residue. Residues aspartate 291, aspartate 350, and glutamate 352 each coordinate Mn(2+). Arginine 354 is an active-site residue.

The protein belongs to the peptidase M17 family. Mn(2+) serves as cofactor.

Its subcellular location is the cytoplasm. The enzyme catalyses Release of an N-terminal amino acid, Xaa-|-Yaa-, in which Xaa is preferably Leu, but may be other amino acids including Pro although not Arg or Lys, and Yaa may be Pro. Amino acid amides and methyl esters are also readily hydrolyzed, but rates on arylamides are exceedingly low.. It catalyses the reaction Release of an N-terminal amino acid, preferentially leucine, but not glutamic or aspartic acids.. In terms of biological role, presumably involved in the processing and regular turnover of intracellular proteins. Catalyzes the removal of unsubstituted N-terminal amino acids from various peptides. This chain is Probable cytosol aminopeptidase, found in Alkaliphilus metalliredigens (strain QYMF).